Here is a 70-residue protein sequence, read N- to C-terminus: Envelope small membrane protein (70 aa).

A lipid anchor (N-myristoyl glycine; by host) is attached at G2. The segment at 2–15 (GSLWSKISQLFVDA) is endoplasmic reticulum retention signal. The Virion surface portion of the chain corresponds to 2-25 (GSLWSKISQLFVDAFTEFLVSVVD). Residues 26–46 (IVIFLAILFGFTVAGWLLVFL) traverse the membrane as a helical segment. Topologically, residues 47 to 70 (LRVVCSALLRSRSAIHSPELSKVL) are intravirion.

It belongs to the arteriviridae E protein family. In terms of assembly, homooligomer. Associates with itself into higher-order structures, including dimers, trimers and tetramers. Associates with the GP2b-GP3-GP4 complex. Myristoylated. Post-translationally, not glycosylated.

The protein resides in the virion membrane. Its subcellular location is the host endoplasmic reticulum membrane. It is found in the host Golgi apparatus membrane. It localises to the secreted. Functionally, minor envelope protein. May function as a viroporin in the virion envelope that facilitates uncoating of the virus in order to release the genomic RNA into the cytoplasm for subsequent replication. In Sus scrofa (Pig), this protein is Envelope small membrane protein (GP2b).